A 351-amino-acid chain; its full sequence is Anthranilate phosphoribosyltransferase (351 aa).

Residues glycine 90, 93–94 (GD), threonine 98, 100–103 (NIST), 118–126 (KHGNRSASG), and serine 130 contribute to the 5-phospho-alpha-D-ribose 1-diphosphate site. Anthranilate is bound at residue glycine 90. Serine 102 provides a ligand contact to Mg(2+). Residue asparagine 121 participates in anthranilate binding. Arginine 176 serves as a coordination point for anthranilate. Mg(2+) contacts are provided by aspartate 235 and glutamate 236.

The protein belongs to the anthranilate phosphoribosyltransferase family. Homodimer. Requires Mg(2+) as cofactor.

It carries out the reaction N-(5-phospho-beta-D-ribosyl)anthranilate + diphosphate = 5-phospho-alpha-D-ribose 1-diphosphate + anthranilate. It participates in amino-acid biosynthesis; L-tryptophan biosynthesis; L-tryptophan from chorismate: step 2/5. Catalyzes the transfer of the phosphoribosyl group of 5-phosphorylribose-1-pyrophosphate (PRPP) to anthranilate to yield N-(5'-phosphoribosyl)-anthranilate (PRA). The protein is Anthranilate phosphoribosyltransferase of Prochlorococcus marinus (strain MIT 9313).